The sequence spans 203 residues: Somatotropin (203 aa).

The signal sequence occupies residues 1-17 (MNRVILLLSVMCVGVSS). Q18 bears the Pyrrolidone carboxylic acid mark. 2 disulfide bridges follow: C68-C176 and C193-C201.

Belongs to the somatotropin/prolactin family.

Its subcellular location is the secreted. Its function is as follows. Growth hormone plays an important role in growth control and is involved in the regulation of several anabolic processes. Implicated as an osmoregulatory substance important for seawater adaptation. This chain is Somatotropin (gh), found in Verasper variegatus (Spotted flounder).